The primary structure comprises 420 residues: Inheritance of peroxisomes protein 1 (420 aa).

Residues 1–10 (MVLSRGETKK) are compositionally biased toward basic and acidic residues. Disordered stretches follow at residues 1-75 (MVLS…QRKR) and 273-309 (SLSDKFKLPPTSDIEPPNTEIINNDDDNDDDDDNYDD). Over residues 30–39 (LKQSLKLSNN) the composition is skewed to low complexity. Positions 45–56 (DSTQHSNDTNKS) are enriched in polar residues. Position 273 is a phosphoserine (serine 273). Over residues 295-309 (NNDDDNDDDDDNYDD) the composition is skewed to acidic residues.

This sequence belongs to the INP1 family. As to quaternary structure, interacts with PEX25, PEX30 and VPS1.

The protein resides in the peroxisome membrane. In terms of biological role, required for peroxisome inheritance. This Saccharomyces cerevisiae (strain ATCC 204508 / S288c) (Baker's yeast) protein is Inheritance of peroxisomes protein 1 (INP1).